Here is a 257-residue protein sequence, read N- to C-terminus: Protein THYLAKOID ASSEMBLY 8-like, chloroplastic (257 aa).

The N-terminal 55 residues, 1 to 55 (MTAIRVCSRKFPTFASIFFQNITRNPSIHRISFSNLKPKTLLHPIPPKPFTVFVS), are a transit peptide targeting the chloroplast. PPR repeat units lie at residues 142-176 (DVFM…NLFP) and 177-211 (DSQT…PDPP).

Belongs to the PPR family. P subfamily.

It localises to the plastid. The protein resides in the chloroplast. Its function is as follows. Binds weakly to specific single strand RNA (ssRNA). This is Protein THYLAKOID ASSEMBLY 8-like, chloroplastic from Arabidopsis thaliana (Mouse-ear cress).